Consider the following 487-residue polypeptide: Putative sugar kinase YoaC (487 aa).

The protein belongs to the FGGY kinase family.

This chain is Putative sugar kinase YoaC (yoaC), found in Bacillus subtilis (strain 168).